A 614-amino-acid polypeptide reads, in one-letter code: MIKKASLLTACSVTAFSAWAQDTSPDTLVVTANRFEQPRSTVLAPTTVVTRQDIDRWQSTSVNDVLRRLPGVDITQNGGSGQLSSIFIRGTNASHVLVLIDGVRLNLAGVSGSADLSQFPIALVQSVEYIRGPRSAVYGSDAIGGVVNIITTRDEPGTEISAGWGSNSYQNYDVSTQQQLGDKTRVTLLGDYAHTHGYDVVAYGNTGTQAQPDNDGFLSKTLYGALEHNFTDAWSGFVRGYGYDNRTNYDAYYSPGSPLVDTRKLYSQSWDAGLRYNGELIKSQLITSYSHSKDYNYDPHYGRYDSSATLDEMKQYTVQWANNIIIGHGNVGAGVDWQKQSTALGTAYVKDGYDQRNTGIYLTGLQQVGDFTFEGAARSDDNSQFGRHGTWQTSAGWEFIEGYRFIASYGTSYKAPNLGQLYGFYGNPNLDPEKSKQWEGAFEGLTAGVNWRISGYRNDVSDLIDYDDHTLKYYNEGKARIKGVEATANFDTGPLTHTVSYDYVDARNAITDTPLLRRAKQQVKYQLDWQLYDFDWGITYQYLGTRYDKDYSSYPYQTVKMGGVSLWDLAVAYPVTSHLTVRGKIANLFDKDYETVYGYQTAGREYTLSGSYTF.

An N-terminal signal peptide occupies residues 1-20 (MIKKASLLTACSVTAFSAWA). The short motif at 26-33 (DTLVVTAN) is the TonB box element. A TBDR plug domain is found at 38–152 (PRSTVLAPTT…IGGVVNIITT (115 aa)). Residues L83, S85, N92, and 110–111 (VS) each bind cyanocob(III)alamin. One can recognise a TBDR beta-barrel domain in the interval 155–614 (EPGTEISAGW…EYTLSGSYTF (460 aa)). The next 3 beta stranded transmembrane spans lie at 158 to 165 (TEISAGWG), 169 to 178 (YQNYDVSTQQ), and 184 to 195 (TRVTLLGDYAHT). Ca(2+) is bound by residues D199, Q211, D213, and D215. The next 2 membrane-spanning stretches (beta stranded) occupy residues 217–227 (FLSKTLYGALE) and 232–248 (DAWSGFVRGYGYDNRTN). 2 residues coordinate Ca(2+): Y249 and D250. Cyanocob(III)alamin is bound at residue A251. A Ca(2+)-binding site is contributed by D261. Beta stranded transmembrane passes span 263 to 277 (RKLYSQSWDAGLRYN), 279 to 296 (ELIKSQLITSYSHSKDYN), 309 to 325 (TLDEMKQYTVQWANNII), 328 to 337 (HGNVGAGVDW), 353 to 369 (YDQRNTGIYLTGLQQVG), 371 to 381 (FTFEGAARSDD), 385 to 400 (FGRHGTWQTSAGWEFI), 403 to 417 (YRFIASYGTSYKAPN), 434 to 443 (KSKQWEGAFE), 449 to 458 (VNWRISGYRN), 473 to 490 (YYNEGKARIKGVEATANF), 494 to 509 (PLTHTVSYDYVDARNA), 517 to 529 (RRAKQQVKYQLDW), and 535 to 550 (DWGITYQYLGTRYDKD). T309 is a cyanocob(III)alamin binding site. R517 provides a ligand contact to cyanocob(III)alamin. Y551 contributes to the cyanocob(III)alamin binding site. Transmembrane regions (beta stranded) follow at residues 558 to 572 (TVKMGGVSLWDLAVA), 585 to 596 (IANLFDKDYETV), and 602 to 614 (AGREYTLSGSYTF). A TonB C-terminal box motif is present at residues 597–614 (YGYQTAGREYTLSGSYTF).

The protein belongs to the TonB-dependent receptor family. BtuB (TC 1.B.14.3.1) subfamily.

The protein localises to the cell outer membrane. In terms of biological role, involved in the active translocation of vitamin B12 (cyanocobalamin) across the outer membrane to the periplasmic space. It derives its energy for transport by interacting with the trans-periplasmic membrane protein TonB. The protein is Vitamin B12 transporter BtuB of Shigella dysenteriae serotype 1 (strain Sd197).